The following is a 946-amino-acid chain: Zinc finger protein rotund (946 aa).

2 disordered regions span residues 10-30 (GPQLAHHPHSNPHNSSHGHSD) and 156-269 (FRKP…HNLN). Residues 161–176 (NNNGYSWSTGNNNEVV) show a composition bias toward polar residues. Low complexity predominate over residues 177–188 (SHSSNGHTNNHP). Polar residues-rich tracts occupy residues 198–230 (ASATQATSVSAINLNQAQPASQTRSNFGSSIKS) and 242–269 (TCKSQENNSGQNPTPNSLSDHNPAHNLN). C2H2-type zinc fingers lie at residues 488 to 510 (YQCKMCPQIFSSKADLQLHTQIH), 517 to 539 (YKCTQCSKAFANSSYLSQHTRIH), 545 to 567 (YRCEICQRKFTQLSHLQQHIRTH), 573 to 597 (YKCRHPGCQKAFSQLSNLQSHSRCH), 603 to 625 (FKCNSCYKCFSDEPSLLEHIPKH), and 634 to 656 (HICQYCGKSYTQETYLTKHMQKH). The segment at 683-853 (GGSANPANGP…TPSAVGPYDA (171 aa)) is disordered. Composition is skewed to low complexity over residues 739–762 (HQQQQQQQQQQQQQQQQQQQQQQQ) and 770–790 (HGVPPQQHVPPQQQQQQQQQQ). Residues 813–822 (TAPNGSQSNG) show a composition bias toward polar residues. Over residues 828-841 (QPHHRMPDPVREDI) the composition is skewed to basic and acidic residues.

Belongs to the krueppel C2H2-type zinc-finger protein family. As to quaternary structure, interacts with nab; which acts as a corepressor. In terms of tissue distribution, isoform rn and isoform roe are expressed in non-overlapping domains in the larval imaginal disks. Isoform rn is first expressed during the early third larval instar in the leg, wing, haltere and antennal part of the eye-antennal imaginal disk. It is observed as a ring in the leg and antenna disks and in the presumptive wing pouch and capitellum of wing and haltere disks respectively. In wing disk it is expressed in 3 concentric domains in the wing pouch. In late third instar, expression of isoform rn in the leg disk is no longer evident, but is maintained in the other disks. Isoform roe appears in the third instar and is confined to the eye part of the eye-antennal imaginal disk in a band of 4-6 cells at the morphogenetic furrow. There is no evidence of roe expression in other imaginal disks.

It is found in the nucleus. In terms of biological role, transcription factor involved in imaginal disks development. Isoform rn is required in the wings, antenna, haltere, proboscis and legs disks, while isoform roe is required in the eye disk. Together with nab corepressor, it is involved in the initiation and maintenance of wingless (wg) expression in the wing hinge, by limiting the expression of wg to this compartment. Also required for the epithelial-mesenchymal transition branch of basolateral junctions signaling. The protein is Zinc finger protein rotund of Drosophila melanogaster (Fruit fly).